A 684-amino-acid polypeptide reads, in one-letter code: Beta-mannosyltransferase 1 (684 aa).

Residues 1–28 lie on the Cytoplasmic side of the membrane; that stretch reads MDKFIQSFSHQYLDSSSSLKLTARRKRK. The helical transmembrane segment at 29–49 threads the bilayer; it reads LTILGLFLFSLISLMIIISYS. Topologically, residues 50–684 are extracellular; the sequence is NNNILPGLSG…KFCKIYGETF (635 aa). An N-linked (GlcNAc...) asparagine glycan is attached at Asn297.

Belongs to the BMT family.

It localises to the membrane. Functionally, beta-mannosyltransferase involved in cell wall biosynthesis. Required for addition of the first beta-mannose residue to acid-stable fraction of cell wall phosphopeptidomannan. Plays a key role in reducing host inflammatory response. This is Beta-mannosyltransferase 1 (BMT1) from Candida albicans (strain SC5314 / ATCC MYA-2876) (Yeast).